The chain runs to 159 residues: Putative 4-hydroxy-4-methyl-2-oxoglutarate aldolase (159 aa).

Residues 74–77 (GDNL) and Arg-96 contribute to the substrate site. Asp-97 is a binding site for a divalent metal cation.

This sequence belongs to the class II aldolase/RraA-like family. In terms of assembly, homotrimer. The cofactor is a divalent metal cation.

It carries out the reaction 4-hydroxy-4-methyl-2-oxoglutarate = 2 pyruvate. The catalysed reaction is oxaloacetate + H(+) = pyruvate + CO2. Its function is as follows. Catalyzes the aldol cleavage of 4-hydroxy-4-methyl-2-oxoglutarate (HMG) into 2 molecules of pyruvate. Also contains a secondary oxaloacetate (OAA) decarboxylase activity due to the common pyruvate enolate transition state formed following C-C bond cleavage in the retro-aldol and decarboxylation reactions. The protein is Putative 4-hydroxy-4-methyl-2-oxoglutarate aldolase of Bacillus cereus (strain ZK / E33L).